A 379-amino-acid polypeptide reads, in one-letter code: UDP-N-acetylglucosamine--N-acetylmuramyl-(pentapeptide) pyrophosphoryl-undecaprenol N-acetylglucosamine transferase (379 aa).

UDP-N-acetyl-alpha-D-glucosamine is bound by residues 13–15, Asn-123, Arg-166, Ser-194, and Gln-295; that span reads TGG.

This sequence belongs to the glycosyltransferase 28 family. MurG subfamily.

It localises to the cell inner membrane. The catalysed reaction is di-trans,octa-cis-undecaprenyl diphospho-N-acetyl-alpha-D-muramoyl-L-alanyl-D-glutamyl-meso-2,6-diaminopimeloyl-D-alanyl-D-alanine + UDP-N-acetyl-alpha-D-glucosamine = di-trans,octa-cis-undecaprenyl diphospho-[N-acetyl-alpha-D-glucosaminyl-(1-&gt;4)]-N-acetyl-alpha-D-muramoyl-L-alanyl-D-glutamyl-meso-2,6-diaminopimeloyl-D-alanyl-D-alanine + UDP + H(+). It participates in cell wall biogenesis; peptidoglycan biosynthesis. Its function is as follows. Cell wall formation. Catalyzes the transfer of a GlcNAc subunit on undecaprenyl-pyrophosphoryl-MurNAc-pentapeptide (lipid intermediate I) to form undecaprenyl-pyrophosphoryl-MurNAc-(pentapeptide)GlcNAc (lipid intermediate II). In Rhodospirillum centenum (strain ATCC 51521 / SW), this protein is UDP-N-acetylglucosamine--N-acetylmuramyl-(pentapeptide) pyrophosphoryl-undecaprenol N-acetylglucosamine transferase.